The primary structure comprises 237 residues: Ribonuclease PH (237 aa).

Residues Arg-86 and 124–126 contribute to the phosphate site; that span reads GTR.

This sequence belongs to the RNase PH family. Homohexameric ring arranged as a trimer of dimers.

It carries out the reaction tRNA(n+1) + phosphate = tRNA(n) + a ribonucleoside 5'-diphosphate. Its function is as follows. Phosphorolytic 3'-5' exoribonuclease that plays an important role in tRNA 3'-end maturation. Removes nucleotide residues following the 3'-CCA terminus of tRNAs; can also add nucleotides to the ends of RNA molecules by using nucleoside diphosphates as substrates, but this may not be physiologically important. Probably plays a role in initiation of 16S rRNA degradation (leading to ribosome degradation) during starvation. The protein is Ribonuclease PH of Methylorubrum extorquens (strain PA1) (Methylobacterium extorquens).